We begin with the raw amino-acid sequence, 72 residues long: Phycobilisome 37.5 kDa linker polypeptide, phycocyanin-associated, rod (72 aa).

The region spanning 1–72 (MTSSAAAIRL…ASGNISVREF (72 aa)) is the PBS-linker domain.

The protein belongs to the phycobilisome linker protein family.

The protein localises to the cellular thylakoid membrane. Rod linker protein, associated with phycocyanin. Linker polypeptides determine the state of aggregation and the location of the disk-shaped phycobiliprotein units within the phycobilisome and modulate their spectroscopic properties in order to mediate a directed and optimal energy transfer. The polypeptide is Phycobilisome 37.5 kDa linker polypeptide, phycocyanin-associated, rod (cpcH2) (Pseudanabaena tenuis (strain PCC 7409)).